Consider the following 662-residue polypeptide: ABC transporter G family member 25 (662 aa).

The disordered stretch occupies residues 1–30 (MSAFDGVENQMNGPDSSPRLSQDPREPRSL). Polar residues predominate over residues 9-20 (NQMNGPDSSPRL). N-linked (GlcNAc...) asparagine glycosylation is present at N56. The 240-residue stretch at 69–308 (QKPSDETRST…FESVGFSPAF (240 aa)) folds into the ABC transporter domain. 101 to 108 (GPSGSGKS) provides a ligand contact to ATP. An N-linked (GlcNAc...) asparagine glycan is attached at N122. Helical transmembrane passes span 374–394 (VNGG…CILL), 406–426 (FDLL…LMWW), 437–457 (LGLL…NAVF), 489–509 (LSME…MVYL), 522–542 (VLLL…AAIM), 547–567 (ASTI…YYVN), and 629–649 (VIGD…FFGY). Residues 388–594 (SQLCILLHRL…CYRLLVAIQY (207 aa)) enclose the ABC transmembrane type-2 domain.

This sequence belongs to the ABC transporter superfamily. ABCG family. Eye pigment precursor importer (TC 3.A.1.204) subfamily. As to expression, mainly expressed in vascular tissues,predominantly in phloem companion cells, with highest levels in roots and seeds, and lower levels in seedlings, stems, leaves and flowers. Mostly observed in inflorescence meristems relative to cauline leaves and developing siliques. In seeds, mainly expressed in the endosperm and, to a lesser extent, in the embryo.

It is found in the cell membrane. It catalyses the reaction abscisate(in) + ATP + H2O = abscisate(out) + ADP + phosphate + H(+). ADP and vanadate (ABC transporters inhibitor) inhibit the ATP-dependent abscisic acid (ABA) uptake. In terms of biological role, high affinity abscisic acid (ABA) transporter that mediates the export of ABA, with a preference for (+)-ABA, through the plasma membrane, especially in vascular tissues (e.g. phloem companion cells), and is involved in the intercellular ABA signaling pathway. Together with ABCG31, export ABA from the endosperm to deliver it to the embryo via ABCG30 and ABCG40-mediated import to suppress radicle extension and subsequent embryonic growth. The chain is ABC transporter G family member 25 from Arabidopsis thaliana (Mouse-ear cress).